A 266-amino-acid chain; its full sequence is Putative carbamate hydrolase RutD (266 aa).

It belongs to the AB hydrolase superfamily. Hydrolase RutD family.

It catalyses the reaction carbamate + 2 H(+) = NH4(+) + CO2. Functionally, involved in pyrimidine catabolism. May facilitate the hydrolysis of carbamate, a reaction that can also occur spontaneously. This is Putative carbamate hydrolase RutD from Escherichia coli O111:H- (strain 11128 / EHEC).